The following is a 571-amino-acid chain: Glutamate--tRNA ligase (571 aa).

The 'HIGH' region signature appears at 106-116 (PNPDGAFHLGN).

This sequence belongs to the class-I aminoacyl-tRNA synthetase family. Glutamate--tRNA ligase type 2 subfamily.

It localises to the cytoplasm. The enzyme catalyses tRNA(Glu) + L-glutamate + ATP = L-glutamyl-tRNA(Glu) + AMP + diphosphate. Catalyzes the attachment of glutamate to tRNA(Glu) in a two-step reaction: glutamate is first activated by ATP to form Glu-AMP and then transferred to the acceptor end of tRNA(Glu). This chain is Glutamate--tRNA ligase, found in Pyrococcus abyssi (strain GE5 / Orsay).